A 489-amino-acid chain; its full sequence is uncharacterized protein (489 aa).

4 disordered regions span residues 1-94, 109-229, 300-389, and 428-461; these read MIEE…GSLD, NRNQ…SDDD, DDNI…TSIQ, and SESG…TLVK. Low complexity-rich tracts occupy residues 43 to 53 and 64 to 77; these read LLVQQSNQSVK and SNGF…NIHD. Positions 121–138 are enriched in acidic residues; it reads NFSEDDEDDDAEDDDSSD. Basic residues predominate over residues 144–154; that stretch reads KKNKPKKPSKL. The segment covering 155-164 has biased composition (basic and acidic residues); that stretch reads MKHDSVDGKN. The segment covering 173–199 has biased composition (basic residues); the sequence is SKKKVQHQLKEKNKKKGIKNDKKKSKP. Positions 308-343 are enriched in acidic residues; the sequence is NDNDNDNDDDNDNDNDNDNDNDNDNDDDENGEDNGE. Composition is skewed to low complexity over residues 344–389 and 433–449; these read DLNI…TSIQ and SISS…SSKS.

This is an uncharacterized protein from Dictyostelium discoideum (Social amoeba).